Consider the following 473-residue polypeptide: Fumarate hydratase class II (473 aa).

Substrate is bound by residues 104–106 (SGT), 128–131 (HPND), 138–140 (SSN), and Thr186. His187 serves as the catalytic Proton donor/acceptor. Ser318 is an active-site residue. Substrate-binding positions include Ser319 and 324 to 326 (KVN).

It belongs to the class-II fumarase/aspartase family. Fumarase subfamily. Homotetramer.

The protein resides in the cytoplasm. It carries out the reaction (S)-malate = fumarate + H2O. Its pathway is carbohydrate metabolism; tricarboxylic acid cycle; (S)-malate from fumarate: step 1/1. Functionally, involved in the TCA cycle. Catalyzes the stereospecific interconversion of fumarate to L-malate. The chain is Fumarate hydratase class II from Corynebacterium efficiens (strain DSM 44549 / YS-314 / AJ 12310 / JCM 11189 / NBRC 100395).